Consider the following 498-residue polypeptide: Protein adenylyltransferase Fic (498 aa).

A helical membrane pass occupies residues 43-63; sequence FAFLAFLAGSFLAFSLHALIS. TPR repeat units lie at residues 126-159 and 160-194; these read ALSSLRLAQDMYMAGKDDKAARLFEHALALAPRH and PEVLLRYGEFLEHNQRNIVLADQYYFQALTINPSH. The short motif at 251-256 is the Inhibitory (S/T)XXXE(G/N) motif element; that stretch reads SVGIEG. ATP contacts are provided by residues glutamate 255 and 336–339; that span reads VGGH. The region spanning 305–440 is the Fido domain; sequence ITIKDILELH…IRPFVRFIAD (136 aa). The active site involves histidine 383. ATP is bound by residues 387–394, 419–420, and asparagine 427; these read DGNGRTSR and YY.

This sequence belongs to the fic family. As to quaternary structure, homodimer.

It is found in the membrane. It carries out the reaction L-tyrosyl-[protein] + ATP = O-(5'-adenylyl)-L-tyrosyl-[protein] + diphosphate. The catalysed reaction is L-threonyl-[protein] + ATP = 3-O-(5'-adenylyl)-L-threonyl-[protein] + diphosphate. It catalyses the reaction 3-O-(5'-adenylyl)-L-threonyl-[protein] + H2O = L-threonyl-[protein] + AMP + H(+). With respect to regulation, the side chain of Glu-255 determines which of the two opposing activities (AMPylase or de-AMPylase) will take place. In response to endoplasmic reticulum stress, mediates de-AMPylase activity. Adenylyltransferase activity is inhibited by the inhibitory helix present at the N-terminus: Glu-255 binds ATP and competes with ATP-binding at Arg-394, thereby preventing adenylyltransferase activity. In unstressed cells, disengagement of Glu-255 promotes adenylyltransferase activity. Activation dissociates ATP-binding from Glu-255, allowing ordered binding of the entire ATP moiety with the alpha-phosphate in an orientation that is productive for accepting an incoming target hydroxyl side chain. In terms of biological role, protein that can both mediate the addition of adenosine 5'-monophosphate (AMP) to specific residues of target proteins (AMPylation), and the removal of the same modification from target proteins (de-AMPylation), depending on the context. The side chain of Glu-255 determines which of the two opposing activities (AMPylase or de-AMPylase) will take place. Acts as a key regulator of the unfolded protein response (UPR) by mediating AMPylation or de-AMPylation of Hsc70-3/BiP. In unstressed cells, acts as an adenylyltransferase by mediating AMPylation of Hsc70-3/BiP at 'Thr-518', thereby inactivating it. In response to endoplasmic reticulum stress, acts as a phosphodiesterase by mediating removal of ATP (de-AMPylation) from Hsc70-3/BiP at 'Thr-518', leading to restore HSPA5/BiP activity. In Drosophila willistoni (Fruit fly), this protein is Protein adenylyltransferase Fic.